The chain runs to 321 residues: Cytochrome c biogenesis protein CcsA (321 aa).

8 helical membrane-spanning segments follow: residues 9–29 (ILTH…LMTL), 44–64 (GIIS…IYSG), 71–91 (LYES…IPYL), 98–118 (LSVI…SCLS), 143–163 (MLLS…LLVI), 225–245 (IISL…VWAN), 260–280 (WAFI…NINF), and 288–308 (VASI…LLGI).

This sequence belongs to the CcmF/CycK/Ccl1/NrfE/CcsA family. May interact with Ccs1.

The protein resides in the plastid. The protein localises to the chloroplast thylakoid membrane. Required during biogenesis of c-type cytochromes (cytochrome c6 and cytochrome f) at the step of heme attachment. This is Cytochrome c biogenesis protein CcsA from Dioscorea elephantipes (Elephant's foot yam).